A 936-amino-acid polypeptide reads, in one-letter code: MSDYKNTLNLPETGFPMRGDLAKREPEMLSRWYKEGLYQAIRQAKSGKKTFILHDGPPYANGNIHIGHSVNKILKDIIIKSKGLSGFDSPYIPGWDCHGLPIELKVEQIVGKPGEKVSAAQFREECRKYAYEQIEAQKKDFIRLGVLGDWDKPYLTMDYKTEANTIRALARIIANGHLLKGAKPVHWCTACGSSLAEAEVEYYDKTSPSIDVRFRAVDSNAVAAKFGVVTDKPISLVIWTTTPWTLPANRAIALNGEFNYALVSFDDECVILAADLVEHVMKRIGVTDWAVLGECKGSDLELLRFNHPFMGFDVPAILGDHVTLDAGTGAVHTAPGHGPDDFVIGQKYGLEVANPVGPNGCYLPNTYPTLDGVFVFKANDVIVELLKEKGALLHHEAMQHSYPCCWRHKTPVIFRATPQWFIGMDKNGLRQQSLKEIKGVKWIPDWGQARIESMVENRPDWCISRQRTWGTPMSLFVHKETQEPHPRTLELMEEVAKRVEVSGIQAWWDLDIRELLGDEADDYMKTPDTLDVWFDSGSTHSTVVDARPEFHGNSADLYLEGSDQHRGWFMSSLMISTAIKGKAPYREVLTHGFTVDGQGRKMSKSIGNTVSPQDVMNKLGADILRLWVASTDYTGEIAVSDEILKRSADTYRRIRNTARFFLANLNGFDPAKHQVKPEEMVILDRWAVGRAKAAQEDILKHYENYDFHNVIQRLMQFCSVEMGSFYLDIIKDRQYTAKSDSVARRSCQTALYHIIEALVRWMAPIMSFTADEIWAQLPGERAKFVFTQEWYTDLFGLEASETLNDEYWAELLAVRSEVNKVLEQARTDKQLRGSLEAAVTLYADKALAEKLNALGNELRFVLLTSQATVADIHDAPENALASDMAGLKIVLSKAQGEKCPRCWHYATDIGQVAEHADLCGRCVTNVAGNGEERKFA.

The short motif at 58 to 68 (PYANGNIHIGH) is the 'HIGH' region element. An L-isoleucyl-5'-AMP-binding site is contributed by glutamate 560. A 'KMSKS' region motif is present at residues 601 to 605 (KMSKS). Lysine 604 provides a ligand contact to ATP. Residues cysteine 899, cysteine 902, cysteine 919, and cysteine 922 each coordinate Zn(2+).

The protein belongs to the class-I aminoacyl-tRNA synthetase family. IleS type 1 subfamily. Monomer. Zn(2+) is required as a cofactor.

It localises to the cytoplasm. The catalysed reaction is tRNA(Ile) + L-isoleucine + ATP = L-isoleucyl-tRNA(Ile) + AMP + diphosphate. Its function is as follows. Catalyzes the attachment of isoleucine to tRNA(Ile). As IleRS can inadvertently accommodate and process structurally similar amino acids such as valine, to avoid such errors it has two additional distinct tRNA(Ile)-dependent editing activities. One activity is designated as 'pretransfer' editing and involves the hydrolysis of activated Val-AMP. The other activity is designated 'posttransfer' editing and involves deacylation of mischarged Val-tRNA(Ile). The protein is Isoleucine--tRNA ligase of Proteus mirabilis (strain HI4320).